The chain runs to 369 residues: Homoserine O-succinyltransferase (369 aa).

One can recognise an AB hydrolase-1 domain in the interval 49–328 (NAVFICHALT…RFDSTQSARM (280 aa)). Ser-154 serves as the catalytic Nucleophile. Position 224 (Arg-224) interacts with substrate. Active-site residues include Asp-317 and His-350. Asp-351 is a substrate binding site.

The protein belongs to the AB hydrolase superfamily. MetX family. Homodimer.

The protein resides in the cytoplasm. The enzyme catalyses L-homoserine + succinyl-CoA = O-succinyl-L-homoserine + CoA. Its pathway is amino-acid biosynthesis; L-methionine biosynthesis via de novo pathway; O-succinyl-L-homoserine from L-homoserine: step 1/1. Its function is as follows. Transfers a succinyl group from succinyl-CoA to L-homoserine, forming succinyl-L-homoserine. The sequence is that of Homoserine O-succinyltransferase from Nocardioides sp. (strain ATCC BAA-499 / JS614).